Here is a 371-residue protein sequence, read N- to C-terminus: Zinc finger CCCH domain-containing protein 21 (371 aa).

The interval 1 to 64 (MPPKQQPKAD…AAKKKKEEEK (64 aa)) is disordered. A compositionally biased stretch (basic and acidic residues) spans 10-23 (DLAKKQKQVEDKTF). The span at 34–46 (VQKYVQSLKQSVQ) shows a compositional bias: polar residues. 2 consecutive C3H1-type zinc fingers follow at residues 88 to 115 (DPKSILCEFFKAGQCQKGFKCKFSHDLN) and 159 to 197 (KPTDIVCKYFLDAVEKKQYGWFWSCPNGGKECHYRHALP). 2 coiled-coil regions span residues 205 to 237 (QMKALLEEESSKKLAVEDEIENERAKLQTATQM) and 283 to 317 (FVDDAEACEEYEREREQEETEQKAKNKEAEAGTSK). Residues 290–371 (CEEYEREREQ…IREPNDEGSS (82 aa)) form a disordered region. Basic and acidic residues predominate over residues 292–312 (EYEREREQEETEQKAKNKEAE). Positions 330–352 (NEEEEDDDDDDDDLDMDELDELE) are enriched in acidic residues.

This chain is Zinc finger CCCH domain-containing protein 21, found in Arabidopsis thaliana (Mouse-ear cress).